The chain runs to 134 residues: Small ribosomal subunit protein uS8 (134 aa).

Belongs to the universal ribosomal protein uS8 family. In terms of assembly, part of the 30S ribosomal subunit. Contacts proteins S5 and S12.

One of the primary rRNA binding proteins, it binds directly to 16S rRNA central domain where it helps coordinate assembly of the platform of the 30S subunit. This Synechococcus sp. (strain JA-3-3Ab) (Cyanobacteria bacterium Yellowstone A-Prime) protein is Small ribosomal subunit protein uS8.